The chain runs to 553 residues: Dihydroxy-acid dehydratase 1 (553 aa).

Position 78 (Asp-78) interacts with Mg(2+). Cys-119 is a binding site for [2Fe-2S] cluster. Mg(2+) contacts are provided by Asp-120 and Lys-121. Lys-121 is subject to N6-carboxylysine. Cys-191 lines the [2Fe-2S] cluster pocket. Mg(2+) is bound at residue Glu-444. Ser-470 serves as the catalytic Proton acceptor.

It belongs to the IlvD/Edd family. As to quaternary structure, homodimer. [2Fe-2S] cluster is required as a cofactor. Requires Mg(2+) as cofactor.

The enzyme catalyses (2R)-2,3-dihydroxy-3-methylbutanoate = 3-methyl-2-oxobutanoate + H2O. It catalyses the reaction (2R,3R)-2,3-dihydroxy-3-methylpentanoate = (S)-3-methyl-2-oxopentanoate + H2O. It functions in the pathway amino-acid biosynthesis; L-isoleucine biosynthesis; L-isoleucine from 2-oxobutanoate: step 3/4. The protein operates within amino-acid biosynthesis; L-valine biosynthesis; L-valine from pyruvate: step 3/4. In terms of biological role, functions in the biosynthesis of branched-chain amino acids. Catalyzes the dehydration of (2R,3R)-2,3-dihydroxy-3-methylpentanoate (2,3-dihydroxy-3-methylvalerate) into 2-oxo-3-methylpentanoate (2-oxo-3-methylvalerate) and of (2R)-2,3-dihydroxy-3-methylbutanoate (2,3-dihydroxyisovalerate) into 2-oxo-3-methylbutanoate (2-oxoisovalerate), the penultimate precursor to L-isoleucine and L-valine, respectively. This chain is Dihydroxy-acid dehydratase 1, found in Methanosarcina acetivorans (strain ATCC 35395 / DSM 2834 / JCM 12185 / C2A).